The chain runs to 183 residues: Gene BABR protein 2 (183 aa).

The protein is Gene BABR protein 2 of Babesia bovis.